We begin with the raw amino-acid sequence, 234 residues long: MEDIKTTTPEVKNEENKTSEVKEGKALEKNNKPHFVKANSSNVKPFERRSNPNNKKPFSKDGSGNKPNKIVKQSVTGLEEKIVGVKKISKTTKGGRNMRFSALAVIGDRKGNVGFGLGKSIEVPVAIRKALKSAKNNMYKVKMNKNFTLYHEVIGKHGAGKVLIKPAPKGTGVIAGGPIKVVLELCGFKDVYSKNLGKNTSLNMVRATIKGLQMQKSPKEYATLRDKTLKDIWE.

Residues 1-10 (MEDIKTTTPE) show a composition bias toward polar residues. The segment at 1 to 69 (MEDIKTTTPE…KDGSGNKPNK (69 aa)) is disordered. Positions 11–31 (VKNEENKTSEVKEGKALEKNN) are enriched in basic and acidic residues. Positions 78–141 (LEEKIVGVKK…KSAKNNMYKV (64 aa)) constitute an S5 DRBM domain.

Belongs to the universal ribosomal protein uS5 family. In terms of assembly, part of the 30S ribosomal subunit. Contacts proteins S4 and S8.

Functionally, with S4 and S12 plays an important role in translational accuracy. Its function is as follows. Located at the back of the 30S subunit body where it stabilizes the conformation of the head with respect to the body. The protein is Small ribosomal subunit protein uS5 of Malacoplasma penetrans (strain HF-2) (Mycoplasma penetrans).